The chain runs to 182 residues: MLLVIGLGNPGKEYQYTRHNVGFIAIEKIANQYNSSFSTKKKFNCEIAETISDRQKIIFIKPTTYMNLSGKSVISVKTYYNIYPAKIFVIHDDIDLETGRIKFKTGGGNGGHNGLKSIDGVIGNNYNRIRIGVGRPQNNQDVADYVLNHFSKPEYKTVMQAIDRITSNFGLILENKLEEFKN.

Residue Tyr-14 coordinates tRNA. His-19 serves as the catalytic Proton acceptor. Residues Tyr-65, Asn-67, and Asn-113 each contribute to the tRNA site.

This sequence belongs to the PTH family. In terms of assembly, monomer.

It localises to the cytoplasm. It carries out the reaction an N-acyl-L-alpha-aminoacyl-tRNA + H2O = an N-acyl-L-amino acid + a tRNA + H(+). Its function is as follows. Hydrolyzes ribosome-free peptidyl-tRNAs (with 1 or more amino acids incorporated), which drop off the ribosome during protein synthesis, or as a result of ribosome stalling. Catalyzes the release of premature peptidyl moieties from peptidyl-tRNA molecules trapped in stalled 50S ribosomal subunits, and thus maintains levels of free tRNAs and 50S ribosomes. The protein is Peptidyl-tRNA hydrolase of Rickettsia peacockii (strain Rustic).